We begin with the raw amino-acid sequence, 254 residues long: Lipid uptake coordinator A (254 aa).

4 helical membrane passes run 5 to 25, 44 to 64, 85 to 105, and 114 to 134; these read VAVL…FYFV, LRIA…FTLL, IMAH…EVWL, and LFGI…GFYL. The segment at 143–254 is disordered; sequence PPPKPLKPKK…SGVQVAKVDE (112 aa). Residues 148–163 are compositionally biased toward basic residues; it reads LKPKKPKQRRLRRKKT. A compositionally biased stretch (acidic residues) spans 169–191; it reads AEPEAAEEAENTELAAQEDEEAV. Low complexity predominate over residues 192-220; sequence EAPPESIESPGGEPESATREAPAAETATA. Basic residues predominate over residues 227 to 244; the sequence is LRNRRPTGKTSHRRRRTR.

As to quaternary structure, interacts with the Mce1 and Mce4 accessory subunits Rv0199/OmamA, Rv0177/Mam1C and Rv3492c/Mam4B.

It localises to the cell membrane. Its function is as follows. Required for the import of both fatty acids and cholesterol during growth in macrophages and in axenic culture. Facilitates the uptake of these lipids by stabilizing protein subunits of the Mce1 and Mce4 multi-subunit transporters, which transport fatty acids and cholesterol, respectively. Required for full virulence in vivo. The protein is Lipid uptake coordinator A of Mycobacterium tuberculosis (strain ATCC 25618 / H37Rv).